A 148-amino-acid polypeptide reads, in one-letter code: Putative ankyrin repeat protein RF_1158 (148 aa).

The stretch at 82-115 (RPTTALGIAIAQGNSEEVIKYLLANGADPKLAFD) is one ANK repeat.

This chain is Putative ankyrin repeat protein RF_1158, found in Rickettsia felis (strain ATCC VR-1525 / URRWXCal2) (Rickettsia azadi).